The chain runs to 146 residues: Universal stress protein MT1672 (146 aa).

This sequence belongs to the universal stress protein A family.

This is Universal stress protein MT1672 from Mycobacterium tuberculosis (strain CDC 1551 / Oshkosh).